Here is a 99-residue protein sequence, read N- to C-terminus: A-type ATP synthase subunit F (99 aa).

It belongs to the V-ATPase F subunit family. In terms of assembly, has multiple subunits with at least A(3), B(3), C, D, E, F, H, I and proteolipid K(x).

It localises to the cell membrane. Functionally, component of the A-type ATP synthase that produces ATP from ADP in the presence of a proton gradient across the membrane. The protein is A-type ATP synthase subunit F of Methanococcus maripaludis (strain C5 / ATCC BAA-1333).